A 207-amino-acid chain; its full sequence is Small ribosomal subunit protein uS4c (207 aa).

Residues 92–153 (MRLDNILFRL…PKIYQSIITK (62 aa)) enclose the S4 RNA-binding domain.

The protein belongs to the universal ribosomal protein uS4 family. In terms of assembly, part of the 30S ribosomal subunit. Contacts protein S5. The interaction surface between S4 and S5 is involved in control of translational fidelity.

Its subcellular location is the plastid. The protein localises to the chloroplast. One of the primary rRNA binding proteins, it binds directly to 16S rRNA where it nucleates assembly of the body of the 30S subunit. Functionally, with S5 and S12 plays an important role in translational accuracy. This Equisetum bogotense (Horsetail) protein is Small ribosomal subunit protein uS4c (rps4).